The following is a 562-amino-acid chain: Gut esterase 1 (562 aa).

A signal peptide spans 1 to 16; that stretch reads MRVLLASLLIFGACWA. C75 and C93 are joined by a disulfide. S199 functions as the Acyl-ester intermediate in the catalytic mechanism. C251 and C259 are oxidised to a cystine. Active-site charge relay system residues include E320 and H451. A Prevents secretion from ER motif is present at residues 559–562; that stretch reads KDEL.

The protein belongs to the type-B carboxylesterase/lipase family. In terms of tissue distribution, expressed only in the intestine.

The protein localises to the endoplasmic reticulum lumen. The enzyme catalyses a carboxylic ester + H2O = an alcohol + a carboxylate + H(+). This is Gut esterase 1 (ges-1) from Caenorhabditis briggsae.